Consider the following 99-residue polypeptide: A-type ATP synthase subunit F (99 aa).

The protein belongs to the V-ATPase F subunit family. In terms of assembly, has multiple subunits with at least A(3), B(3), C, D, E, F, H, I and proteolipid K(x).

The protein localises to the cell membrane. Its function is as follows. Component of the A-type ATP synthase that produces ATP from ADP in the presence of a proton gradient across the membrane. The polypeptide is A-type ATP synthase subunit F (Methanococcus maripaludis (strain C5 / ATCC BAA-1333)).